Consider the following 459-residue polypeptide: V-type ATP synthase beta chain (459 aa).

Belongs to the ATPase alpha/beta chains family.

Functionally, produces ATP from ADP in the presence of a proton gradient across the membrane. The V-type beta chain is a regulatory subunit. This chain is V-type ATP synthase beta chain, found in Clostridium botulinum (strain Alaska E43 / Type E3).